The following is a 147-amino-acid chain: Hemoglobin subunit delta (147 aa).

One can recognise a Globin domain in the interval 3-147; it reads HLTGEEKAAV…VANALAHKYH (145 aa). 2 residues coordinate heme b: histidine 64 and histidine 93.

Belongs to the globin family. In terms of assembly, heterotetramer of two delta chains and two alpha chains. As to expression, red blood cells.

This is Hemoglobin subunit delta (HBD) from Ailuropoda melanoleuca (Giant panda).